The following is a 393-amino-acid chain: Phosphoglycerate kinase (393 aa).

Residues 21–23 (DMN), R36, 59–62 (HLGR), R114, and R147 each bind substrate. ATP is bound by residues K198, E320, and 346-349 (GGDT).

Belongs to the phosphoglycerate kinase family. As to quaternary structure, monomer.

It localises to the cytoplasm. It catalyses the reaction (2R)-3-phosphoglycerate + ATP = (2R)-3-phospho-glyceroyl phosphate + ADP. Its pathway is carbohydrate degradation; glycolysis; pyruvate from D-glyceraldehyde 3-phosphate: step 2/5. The sequence is that of Phosphoglycerate kinase from Thiobacillus denitrificans (strain ATCC 25259 / T1).